We begin with the raw amino-acid sequence, 259 residues long: MDAWVRFSAQSQARERLCRAAQYACSLLGHVLQRHGASPELQKQIRQLESHLSLGRKLLRLGNSADALESAKRAVHLSDVVLRFCITVSHLNRALYFACDNVLWAGKSGLAPRVDQEKWAQRSFRYYLFSLIMNLSRDAYEIRLLMEQESSACSRRLKGSGGGVPGGSETGGLGGPGTPGGHLPQLALKLRLQVLLLARVLRGHPPLLLDVVRNACDLFIPLDKLGLWRCGPGIVGLCGLVSSILSILTLIYPWLRLKP.

N6-acetyllysine is present on lysine 43. The interaction with PEX19, PEX11G and FIS1 and peroxisome targeting stretch occupies residues 211 to 259 (VVRNACDLFIPLDKLGLWRCGPGIVGLCGLVSSILSILTLIYPWLRLKP). The helical transmembrane segment at 234–254 (IVGLCGLVSSILSILTLIYPW) threads the bilayer.

It belongs to the peroxin-11 family. As to quaternary structure, homodimer. Heterodimer with PEX11G. Interacts with PEX19. Interacts with FIS1.

The protein localises to the peroxisome membrane. Its function is as follows. Involved in peroxisomal proliferation. May regulate peroxisome division by recruiting the dynamin-related GTPase DNM1L to the peroxisomal membrane. Promotes membrane protrusion and elongation on the peroxisomal surface. This Pongo abelii (Sumatran orangutan) protein is Peroxisomal membrane protein 11B (PEX11B).